Consider the following 661-residue polypeptide: Methyl-accepting chemotaxis protein McpA (661 aa).

Residues 1 to 16 are Cytoplasmic-facing; it reads MKKILQLIKQRSITRK. A helical transmembrane segment spans residues 17 to 37; the sequence is LLVSFLSILIIPVVILAIFAY. Residues 38 to 281 are Extracellular-facing; it reads QSASSSLDRQ…IHEAAQPVLH (244 aa). Positions 152–228 constitute a Cache domain; sequence ITDPYKTAST…QSGTELKGDW (77 aa). Residues 282–302 traverse the membrane as a helical segment; sequence LALIVLAAAIIIGIIVMTLII. Positions 303 to 355 constitute an HAMP domain; that stretch reads RSITTPLKQLVGSSKRISEGDLTETIDIRSKDELGELGKSFNNMASSLRSLIH. Topologically, residues 303 to 661 are cytoplasmic; that stretch reads RSITTPLKQL…RDMTKRFKIE (359 aa). Glutamate methyl ester (Glu) is present on Glu-370. The 237-residue stretch at 374-610 folds into the Methyl-accepting transducer domain; sequence SAAQTSKATE…EVSGASEHIA (237 aa). Deamidated glutamine is present on residues Gln-593 and Gln-594. A Glutamate methyl ester (Gln) modification is found at Gln-594. 2 positions are modified to glutamate methyl ester (Glu): Glu-629 and Glu-636.

It belongs to the methyl-accepting chemotaxis (MCP) protein family. Interacts with FloT. Post-translationally, deamidated by CheD on Gln-593 and Gln-594, producing glutamate residues. The glutamate residues are then methylated. Other additional sites are deamidated and methylated as well.

The protein resides in the cell membrane. Its subcellular location is the membrane raft. Chemotactic-signal transducers respond to changes in the concentration of attractants and repellents in the environment, transduce a signal from the outside to the inside of the cell, and facilitate sensory adaptation through the variation of the level of methylation. All amino acids serve as attractants in B.subtilis, they appear to cause an increase in the turnover methyl groups, leading to methylation of an unidentified acceptor, while repellents have been shown to cause a decrease in methyl group turnover. The methyl groups are added by a methyltransferase and removed by a methylesterase. McpA is required for taxis towards glucose and alpha-methylglucoside. The chain is Methyl-accepting chemotaxis protein McpA (mcpA) from Bacillus subtilis (strain 168).